A 402-amino-acid chain; its full sequence is NADH-quinone oxidoreductase subunit D (402 aa).

The protein belongs to the complex I 49 kDa subunit family. NDH-1 is composed of 14 different subunits. Subunits NuoB, C, D, E, F, and G constitute the peripheral sector of the complex.

It localises to the cell inner membrane. The catalysed reaction is a quinone + NADH + 5 H(+)(in) = a quinol + NAD(+) + 4 H(+)(out). Functionally, NDH-1 shuttles electrons from NADH, via FMN and iron-sulfur (Fe-S) centers, to quinones in the respiratory chain. The immediate electron acceptor for the enzyme in this species is believed to be ubiquinone. Couples the redox reaction to proton translocation (for every two electrons transferred, four hydrogen ions are translocated across the cytoplasmic membrane), and thus conserves the redox energy in a proton gradient. The sequence is that of NADH-quinone oxidoreductase subunit D from Rhodopseudomonas palustris (strain ATCC BAA-98 / CGA009).